We begin with the raw amino-acid sequence, 147 residues long: Transcriptional regulator MraZ (147 aa).

SpoVT-AbrB domains are found at residues 5 to 47 and 76 to 123; these read QQLR…SEKE and TFEI…SKSK.

This sequence belongs to the MraZ family. Forms oligomers.

It is found in the cytoplasm. It localises to the nucleoid. This chain is Transcriptional regulator MraZ, found in Mycoplasmopsis synoviae (strain 53) (Mycoplasma synoviae).